The following is a 218-amino-acid chain: Ras-related protein Rab-4A (218 aa).

GTP is bound by residues G23, T24, G25, K26, S27, C28, S42, H44, and T45. S27 provides a ligand contact to Mg(2+). The short motif at 44–49 (HTIGVE) is the Switch 1 element. Residues T45 and D68 each coordinate Mg(2+). A Switch 2 motif is present at residues 70 to 79 (AGQERFRSVT). Residue G71 coordinates GTP. A 5-glutamyl serotonin modification is found at Q72. GTP-binding residues include N126, K127, D129, A157, and L158. S190 is subject to Phosphoserine. At S204 the chain carries Phosphoserine; by CDK1. Residues C216 and C218 are each lipidated (S-geranylgeranyl cysteine). Residue C218 is modified to Cysteine methyl ester.

Belongs to the small GTPase superfamily. Rab family. Interacts with SGSM1, SGSM2 and SGSM3. Interacts with RAB11FIP1, RABEP1, ZFYVE20 and RUFY1. Interacts (membrane-bound form) with NDRG1; the interaction involves NDRG1 in vesicular recycling of E-cadherin. Interacts (in GTP-bound form) with GRIPAP1 (via N-terminus). Interacts with RABEP1 and RBSN. Does not interact with HPS4. Does not interact with HPS4. Interacts with RABEP2; this interaction may mediate VEGFR2 cell surface expression. The cofactor is Mg(2+). In terms of processing, serotonylation of Gln-72 by TGM2 during activation and aggregation of platelets leads to constitutive activation of GTPase activity. Post-translationally, phosphorylated by CDK1 kinase during mitosis. In terms of tissue distribution, expressed in the central nervous system, including cortex, cerebellum, midbrain and spinal cord, and in the kidney, lung, liver and spleen.

The protein resides in the membrane. It is found in the cytoplasm. It localises to the early endosome membrane. The protein localises to the recycling endosome membrane. The catalysed reaction is GTP + H2O = GDP + phosphate + H(+). With respect to regulation, regulated by guanine nucleotide exchange factors (GEFs) which promote the exchange of bound GDP for free GTP. Regulated by GTPase activating proteins (GAPs) which increase the GTP hydrolysis activity. Inhibited by GDP dissociation inhibitors (GDIs). In terms of biological role, the small GTPases Rab are key regulators of intracellular membrane trafficking, from the formation of transport vesicles to their fusion with membranes. Rabs cycle between an inactive GDP-bound form and an active GTP-bound form that is able to recruit to membranes different sets of downstream effectors directly responsible for vesicle formation, movement, tethering and fusion. RAB4A is involved in protein transport. Also plays a role in vesicular traffic. Mediates VEGFR2 endosomal trafficking to enhance VEGFR2 signaling. Acts as a regulator of platelet alpha-granule release during activation and aggregation of platelets. The polypeptide is Ras-related protein Rab-4A (Mus musculus (Mouse)).